We begin with the raw amino-acid sequence, 360 residues long: Photosystem II protein D1 3 (360 aa).

3 helical membrane-spanning segments follow: residues 29–46 (YVGWFGVLMIPTLLAATI), 118–133 (HFLIGVFCYMGREWEL), and 142–156 (WICVAYSAPVAAATA). His-118 is a chlorophyll a binding site. Position 126 (Tyr-126) interacts with pheophytin a. [CaMn4O5] cluster is bound by residues Asp-170 and Glu-189. Residues 197–218 (FHQLGVAGVFGGALFSAMHGSL) traverse the membrane as a helical segment. His-198 is a chlorophyll a binding site. A quinone-binding positions include His-215 and 264–265 (SF). His-215 is a Fe cation binding site. Position 272 (His-272) interacts with Fe cation. A helical membrane pass occupies residues 274–288 (FLAAWPVIGIWFTAL). Positions 332, 333, 342, and 344 each coordinate [CaMn4O5] cluster. Residues 345 to 360 (SAESAPVAMIAPSING) constitute a propeptide that is removed on maturation.

Belongs to the reaction center PufL/M/PsbA/D family. In terms of assembly, PSII is composed of 1 copy each of membrane proteins PsbA, PsbB, PsbC, PsbD, PsbE, PsbF, PsbH, PsbI, PsbJ, PsbK, PsbL, PsbM, PsbT, PsbX, PsbY, PsbZ, Psb30/Ycf12, peripheral proteins PsbO, CyanoQ (PsbQ), PsbU, PsbV and a large number of cofactors. It forms dimeric complexes. Precursor protein interacts with Ycf48. It depends on The D1/D2 heterodimer binds P680, chlorophylls that are the primary electron donor of PSII, and subsequent electron acceptors. It shares a non-heme iron and each subunit binds pheophytin, quinone, additional chlorophylls, carotenoids and lipids. D1 provides most of the ligands for the Mn4-Ca-O5 cluster of the oxygen-evolving complex (OEC). There is also a Cl(-1) ion associated with D1 and D2, which is required for oxygen evolution. The PSII complex binds additional chlorophylls, carotenoids and specific lipids. as a cofactor. C-terminally processed by CtpA; processing is essential to allow assembly of the oxygen-evolving complex and thus photosynthetic growth. Post-translationally, tyr-161 forms a radical intermediate that is referred to as redox-active TyrZ, YZ or Y-Z.

It localises to the cellular thylakoid membrane. The catalysed reaction is 2 a plastoquinone + 4 hnu + 2 H2O = 2 a plastoquinol + O2. Functionally, photosystem II (PSII) is a light-driven water:plastoquinone oxidoreductase that uses light energy to abstract electrons from H(2)O, generating O(2) and a proton gradient subsequently used for ATP formation. It consists of a core antenna complex that captures photons, and an electron transfer chain that converts photonic excitation into a charge separation. The D1/D2 (PsbA/PsbD) reaction center heterodimer binds P680, the primary electron donor of PSII as well as several subsequent electron acceptors. The sequence is that of Photosystem II protein D1 3 from Thermosynechococcus vestitus (strain NIES-2133 / IAM M-273 / BP-1).